The following is a 174-amino-acid chain: MKFLLLTVGLALIGAIQAVENIRSKNDLGVEKFVGSWYLREAAKTMEFSIPLFDMDIKEVNLTPEGNLELVLLEKADRCVEKKLLLKKTQKPTEFEIYISSESASYTFSVMETDYDSYFLFCLYNISDREKMACAHYVRRIEENKGMNEFKKILRTLAMPYTVIEVRTRDMCHV.

Positions 1–18 (MKFLLLTVGLALIGAIQA) are cleaved as a signal peptide. 2 disulfides stabilise this stretch: cysteine 79–cysteine 172 and cysteine 122–cysteine 134.

It belongs to the calycin superfamily. Lipocalin family. In terms of assembly, monomer.

It localises to the secreted. Its function is as follows. Lactoglobulin is the primary component of whey, it binds retinol and is probably involved in the transport of that molecule. The sequence is that of Beta-lactoglobulin (LGB) from Notamacropus eugenii (Tammar wallaby).